Here is a 185-residue protein sequence, read N- to C-terminus: Elongation factor P (185 aa).

The protein belongs to the elongation factor P family.

It localises to the cytoplasm. The protein operates within protein biosynthesis; polypeptide chain elongation. Its function is as follows. Involved in peptide bond synthesis. Stimulates efficient translation and peptide-bond synthesis on native or reconstituted 70S ribosomes in vitro. Probably functions indirectly by altering the affinity of the ribosome for aminoacyl-tRNA, thus increasing their reactivity as acceptors for peptidyl transferase. The chain is Elongation factor P from Synechococcus sp. (strain JA-3-3Ab) (Cyanobacteria bacterium Yellowstone A-Prime).